Reading from the N-terminus, the 447-residue chain is Gamma-glutamyl phosphate reductase (447 aa).

The protein belongs to the gamma-glutamyl phosphate reductase family.

Its subcellular location is the cytoplasm. The catalysed reaction is L-glutamate 5-semialdehyde + phosphate + NADP(+) = L-glutamyl 5-phosphate + NADPH + H(+). It functions in the pathway amino-acid biosynthesis; L-proline biosynthesis; L-glutamate 5-semialdehyde from L-glutamate: step 2/2. In terms of biological role, catalyzes the NADPH-dependent reduction of L-glutamate 5-phosphate into L-glutamate 5-semialdehyde and phosphate. The product spontaneously undergoes cyclization to form 1-pyrroline-5-carboxylate. The chain is Gamma-glutamyl phosphate reductase from Methanosarcina mazei (strain ATCC BAA-159 / DSM 3647 / Goe1 / Go1 / JCM 11833 / OCM 88) (Methanosarcina frisia).